Reading from the N-terminus, the 140-residue chain is Methylglyoxal synthase (140 aa).

The MGS-like domain maps to 1–140 (MNIALIAHDE…KERQEKEGTP (140 aa)). Residues histidine 8, lysine 12, 34–37 (TGTT), and 54–55 (SG) contribute to the substrate site. The Proton donor/acceptor role is filled by aspartate 60. Residue histidine 87 participates in substrate binding.

This sequence belongs to the methylglyoxal synthase family.

The catalysed reaction is dihydroxyacetone phosphate = methylglyoxal + phosphate. Its function is as follows. Catalyzes the formation of methylglyoxal from dihydroxyacetone phosphate. The sequence is that of Methylglyoxal synthase from Oceanobacillus iheyensis (strain DSM 14371 / CIP 107618 / JCM 11309 / KCTC 3954 / HTE831).